Reading from the N-terminus, the 300-residue chain is Aspartate carbamoyltransferase catalytic subunit (300 aa).

Residues R54 and T55 each coordinate carbamoyl phosphate. Position 82 (K82) interacts with L-aspartate. Residues R104, H131, and Q134 each coordinate carbamoyl phosphate. L-aspartate is bound by residues R164 and R213. Residues A256 and P257 each contribute to the carbamoyl phosphate site.

The protein belongs to the aspartate/ornithine carbamoyltransferase superfamily. ATCase family. Heterododecamer (2C3:3R2) of six catalytic PyrB chains organized as two trimers (C3), and six regulatory PyrI chains organized as three dimers (R2).

The catalysed reaction is carbamoyl phosphate + L-aspartate = N-carbamoyl-L-aspartate + phosphate + H(+). The protein operates within pyrimidine metabolism; UMP biosynthesis via de novo pathway; (S)-dihydroorotate from bicarbonate: step 2/3. Functionally, catalyzes the condensation of carbamoyl phosphate and aspartate to form carbamoyl aspartate and inorganic phosphate, the committed step in the de novo pyrimidine nucleotide biosynthesis pathway. The protein is Aspartate carbamoyltransferase catalytic subunit of Malacoplasma penetrans (strain HF-2) (Mycoplasma penetrans).